We begin with the raw amino-acid sequence, 112 residues long: Ciliary microtubule inner protein 3 (112 aa).

The interval 1–34 (MCKDSQKPSVPSHGPKTPSCKGVKAPHSSRPRAW) is disordered.

It belongs to the CIMIP3-like family.

The protein resides in the cytoplasm. It is found in the cytoskeleton. The protein localises to the flagellum axoneme. The polypeptide is Ciliary microtubule inner protein 3 (Homo sapiens (Human)).